The following is a 465-amino-acid chain: Probable multidrug resistance protein NorM (465 aa).

Helical transmembrane passes span 61–83 (VLAGQFFFVVFIFGSGFSVAVVP), 104–126 (GMWVAIAYWLLALPIFFNAERIL), 141–163 (HYLAIAKFGLLPALLFYVLRGLV), 170–192 (GIILYVTIIMLVMNGLMAYVLVF), 202–224 (MNGAAVVAVIVNAFSFIFIVAYV), 251–273 (LRLGLPISITILAEVTLFAAASI), 283–305 (LAAHGIALQLASIAFMIPLGLSQ), 326–348 (ASIMIYAIACGIALCGGILFAAV), 368–390 (LAYASSLVVIAGIFQLVDGIQAV), 403–425 (IPAMLALISYWPIGLALAWTMAF), and 435–457 (WFGFVIGLSTAAVLLTVRFVLLV).

The protein belongs to the multi antimicrobial extrusion (MATE) (TC 2.A.66.1) family.

The protein resides in the cell inner membrane. In terms of biological role, multidrug efflux pump. This Agrobacterium fabrum (strain C58 / ATCC 33970) (Agrobacterium tumefaciens (strain C58)) protein is Probable multidrug resistance protein NorM (norM).